Consider the following 156-residue polypeptide: Ribosomal RNA large subunit methyltransferase H (156 aa).

S-adenosyl-L-methionine-binding positions include Leu73, Gly104, and 123–128; that span reads LSSLTL.

This sequence belongs to the RNA methyltransferase RlmH family. Homodimer.

It localises to the cytoplasm. It catalyses the reaction pseudouridine(1915) in 23S rRNA + S-adenosyl-L-methionine = N(3)-methylpseudouridine(1915) in 23S rRNA + S-adenosyl-L-homocysteine + H(+). Functionally, specifically methylates the pseudouridine at position 1915 (m3Psi1915) in 23S rRNA. The sequence is that of Ribosomal RNA large subunit methyltransferase H from Bordetella avium (strain 197N).